A 170-amino-acid chain; its full sequence is Photosystem I assembly protein Ycf3 (170 aa).

TPR repeat units follow at residues 35-68, 72-105, and 120-153; these read AFTY…EIDP, SYIL…NPFL, and GEQA…TPGN.

Belongs to the Ycf3 family.

The protein localises to the plastid. It is found in the chloroplast thylakoid membrane. Its function is as follows. Essential for the assembly of the photosystem I (PSI) complex. May act as a chaperone-like factor to guide the assembly of the PSI subunits. This chain is Photosystem I assembly protein Ycf3, found in Agrostis stolonifera (Creeping bentgrass).